Here is a 799-residue protein sequence, read N- to C-terminus: Rho GTPase-activating protein gacI (799 aa).

Residues 226–451 (IKLEEVFARE…LLVEHVLTIF (226 aa)) form the Rho-GAP domain. Residues 472–520 (RSQSDISSQTKPLPSLPTSPQNRSAIITGDSSSPSLNTPPVKSSLNSSD) are compositionally biased toward polar residues. Disordered stretches follow at residues 472–572 (RSQS…PTSN) and 741–799 (EKQQ…LSNQ). The span at 525–549 (DNGSNNNNNNNTTNTITNNGIADTA) shows a compositional bias: low complexity. The span at 550–568 (TPPPPTTPTAPTTPPPPTT) shows a compositional bias: pro residues. 2 stretches are compositionally biased toward low complexity: residues 743–752 (QQQQQQQQTN) and 759–791 (ISSN…LNSS).

Its subcellular location is the cytoplasm. Rho GTPase-activating protein involved in the signal transduction pathway. This chain is Rho GTPase-activating protein gacI (gacI), found in Dictyostelium discoideum (Social amoeba).